We begin with the raw amino-acid sequence, 466 residues long: Arginine biosynthesis bifunctional protein ArgJ, mitochondrial (466 aa).

Substrate-binding residues include Thr194, Lys223, Thr234, Glu321, Asn461, and Thr466. Catalysis depends on Thr234, which acts as the Nucleophile.

It belongs to the ArgJ family. Heterodimer of an alpha and a beta chain. The alpha and beta chains are autoproteolytically processed from a single precursor protein within the mitochondrion.

It is found in the mitochondrion matrix. It carries out the reaction N(2)-acetyl-L-ornithine + L-glutamate = N-acetyl-L-glutamate + L-ornithine. It catalyses the reaction L-glutamate + acetyl-CoA = N-acetyl-L-glutamate + CoA + H(+). Its pathway is amino-acid biosynthesis; L-arginine biosynthesis; L-ornithine and N-acetyl-L-glutamate from L-glutamate and N(2)-acetyl-L-ornithine (cyclic): step 1/1. It functions in the pathway amino-acid biosynthesis; L-arginine biosynthesis; N(2)-acetyl-L-ornithine from L-glutamate: step 1/4. Catalyzes two activities which are involved in the cyclic version of arginine biosynthesis: the synthesis of acetylglutamate from glutamate and acetyl-CoA, and of ornithine by transacetylation between acetylornithine and glutamate. This chain is Arginine biosynthesis bifunctional protein ArgJ, mitochondrial, found in Aspergillus flavus (strain ATCC 200026 / FGSC A1120 / IAM 13836 / NRRL 3357 / JCM 12722 / SRRC 167).